A 446-amino-acid polypeptide reads, in one-letter code: Bifunctional protein GlmU (446 aa).

The interval 1 to 226 is pyrophosphorylase; it reads MLAIAILAAG…PFEIKGINDR (226 aa). Residues 7 to 10, Lys-21, Gln-73, and 78 to 79 each bind UDP-N-acetyl-alpha-D-glucosamine; these read LAAG and GT. Asp-103 lines the Mg(2+) pocket. Residues Gly-140, Glu-155, Asn-170, and Asn-224 each contribute to the UDP-N-acetyl-alpha-D-glucosamine site. Asn-224 is a binding site for Mg(2+). A linker region spans residues 227 to 247; the sequence is VQLSECEHYIQEELKSLWMSK. The N-acetyltransferase stretch occupies residues 248-446; the sequence is GVSFVDPISC…SKAIIRTKAD (199 aa). UDP-N-acetyl-alpha-D-glucosamine is bound by residues Arg-329 and Lys-347. His-359 functions as the Proton acceptor in the catalytic mechanism. UDP-N-acetyl-alpha-D-glucosamine contacts are provided by Tyr-362 and Asn-373. Acetyl-CoA is bound by residues Ala-376, Ala-419, and Arg-436.

It in the N-terminal section; belongs to the N-acetylglucosamine-1-phosphate uridyltransferase family. In the C-terminal section; belongs to the transferase hexapeptide repeat family. In terms of assembly, homotrimer. Mg(2+) serves as cofactor.

It is found in the cytoplasm. It catalyses the reaction alpha-D-glucosamine 1-phosphate + acetyl-CoA = N-acetyl-alpha-D-glucosamine 1-phosphate + CoA + H(+). The enzyme catalyses N-acetyl-alpha-D-glucosamine 1-phosphate + UTP + H(+) = UDP-N-acetyl-alpha-D-glucosamine + diphosphate. Its pathway is nucleotide-sugar biosynthesis; UDP-N-acetyl-alpha-D-glucosamine biosynthesis; N-acetyl-alpha-D-glucosamine 1-phosphate from alpha-D-glucosamine 6-phosphate (route II): step 2/2. It participates in nucleotide-sugar biosynthesis; UDP-N-acetyl-alpha-D-glucosamine biosynthesis; UDP-N-acetyl-alpha-D-glucosamine from N-acetyl-alpha-D-glucosamine 1-phosphate: step 1/1. The protein operates within bacterial outer membrane biogenesis; LPS lipid A biosynthesis. Functionally, catalyzes the last two sequential reactions in the de novo biosynthetic pathway for UDP-N-acetylglucosamine (UDP-GlcNAc). The C-terminal domain catalyzes the transfer of acetyl group from acetyl coenzyme A to glucosamine-1-phosphate (GlcN-1-P) to produce N-acetylglucosamine-1-phosphate (GlcNAc-1-P), which is converted into UDP-GlcNAc by the transfer of uridine 5-monophosphate (from uridine 5-triphosphate), a reaction catalyzed by the N-terminal domain. In Prochlorococcus marinus (strain NATL2A), this protein is Bifunctional protein GlmU.